The sequence spans 339 residues: Serpentine receptor class gamma-7 (339 aa).

7 consecutive transmembrane segments (helical) span residues 30-50 (YWIQ…IIIT), 65-85 (WILT…LFVV), 98-118 (FSTI…IYNY), 152-172 (IPLF…NTVI), 200-220 (LHLT…LLLM), 239-259 (SIFI…YAFF), and 268-288 (FLVD…PLIF). The segment at 319 to 339 (PFNNTMPRQESPSPNYDSILA) is disordered.

This sequence belongs to the nematode receptor-like protein srg family.

It localises to the membrane. This is Serpentine receptor class gamma-7 (srg-7) from Caenorhabditis elegans.